Here is a 63-residue protein sequence, read N- to C-terminus: Conotoxin Lt11.1 (63 aa).

The signal sequence occupies residues 1 to 23 (MMFRLTSVLLVIVLLNLVVLTNA). 4 disulfides stabilise this stretch: Cys24/Cys34, Cys28/Cys39, Cys33/Cys42, and Cys38/Cys47. The propeptide occupies 53–63 (ALLQRLLGHQR).

It belongs to the conotoxin I2 superfamily. Expressed by the venom duct.

The protein localises to the secreted. This chain is Conotoxin Lt11.1, found in Conus litteratus (Lettered cone).